Consider the following 635-residue polypeptide: 1-deoxy-D-xylulose-5-phosphate synthase (635 aa).

Thiamine diphosphate is bound by residues His74 and 115 to 117 (AHS). Asp146 serves as a coordination point for Mg(2+). Thiamine diphosphate is bound by residues 147-148 (GA), Asn176, Tyr283, and Glu365. Mg(2+) is bound at residue Asn176.

The protein belongs to the transketolase family. DXPS subfamily. As to quaternary structure, homodimer. The cofactor is Mg(2+). Thiamine diphosphate serves as cofactor.

The enzyme catalyses D-glyceraldehyde 3-phosphate + pyruvate + H(+) = 1-deoxy-D-xylulose 5-phosphate + CO2. It functions in the pathway metabolic intermediate biosynthesis; 1-deoxy-D-xylulose 5-phosphate biosynthesis; 1-deoxy-D-xylulose 5-phosphate from D-glyceraldehyde 3-phosphate and pyruvate: step 1/1. Functionally, catalyzes the acyloin condensation reaction between C atoms 2 and 3 of pyruvate and glyceraldehyde 3-phosphate to yield 1-deoxy-D-xylulose-5-phosphate (DXP). In Polaromonas sp. (strain JS666 / ATCC BAA-500), this protein is 1-deoxy-D-xylulose-5-phosphate synthase.